Consider the following 852-residue polypeptide: Lon protease homolog 2, peroxisomal (852 aa).

The residue at position 2 (Ser2) is an N-acetylserine. Residues 13–222 form the Lon N-terminal domain; it reads LPLLLTHESV…MTIPLLVRQI (210 aa). 375–382 is a binding site for ATP; it reads GPPGVGKT. The region spanning 651-837 is the Lon proteolytic domain; the sequence is LSQPGVAIGL…DEVLNAAFDG (187 aa). Residues Ser743 and Lys786 contribute to the active site. The short motif at 850–852 is the Microbody targeting signal element; it reads SKL.

Belongs to the peptidase S16 family. Interacts with PEX5. Interacts with TYSND1. May interact with enzymes involved in beta-oxidation of fatty acids, including ACOX1/AOX.

It localises to the peroxisome matrix. It catalyses the reaction Hydrolysis of proteins in presence of ATP.. Functionally, ATP-dependent serine protease that mediates the selective degradation of misfolded and unassembled polypeptides in the peroxisomal matrix. Necessary for type 2 peroxisome targeting signal (PTS2)-containing protein processing and facilitates peroxisome matrix protein import. May indirectly regulate peroxisomal fatty acid beta-oxidation through degradation of the self-processed forms of TYSND1. The sequence is that of Lon protease homolog 2, peroxisomal (Lonp2) from Mus musculus (Mouse).